The following is a 398-amino-acid chain: Phosphoglycerate kinase (398 aa).

Substrate contacts are provided by residues 23–25 (DLN), R38, 61–64 (HFGR), R120, and R153. ATP is bound by residues K203, E325, and 355–358 (GGDT).

This sequence belongs to the phosphoglycerate kinase family. In terms of assembly, monomer.

The protein localises to the cytoplasm. It carries out the reaction (2R)-3-phosphoglycerate + ATP = (2R)-3-phospho-glyceroyl phosphate + ADP. It functions in the pathway carbohydrate degradation; glycolysis; pyruvate from D-glyceraldehyde 3-phosphate: step 2/5. In Mesorhizobium japonicum (strain LMG 29417 / CECT 9101 / MAFF 303099) (Mesorhizobium loti (strain MAFF 303099)), this protein is Phosphoglycerate kinase.